An 80-amino-acid chain; its full sequence is Acyl carrier protein (80 aa).

One can recognise a Carrier domain in the interval 4–79; it reads EEIKDKVFDI…QAIDYIVNAK (76 aa). The residue at position 39 (S39) is an O-(pantetheine 4'-phosphoryl)serine.

The protein belongs to the acyl carrier protein (ACP) family. In terms of processing, 4'-phosphopantetheine is transferred from CoA to a specific serine of apo-ACP by AcpS. This modification is essential for activity because fatty acids are bound in thioester linkage to the sulfhydryl of the prosthetic group.

It localises to the cytoplasm. It participates in lipid metabolism; fatty acid biosynthesis. Functionally, carrier of the growing fatty acid chain in fatty acid biosynthesis. This Prosthecochloris aestuarii (strain DSM 271 / SK 413) protein is Acyl carrier protein.